The following is a 226-amino-acid chain: Neuron-specific vesicular protein calcyon (226 aa).

A disordered region spans residues 1–21 (MVKLGCSFSGKPGKEAGDQDG). The Extracellular portion of the chain corresponds to 1–88 (MVKLGCSFSG…EEGRRLPTAR (88 aa)). Residues 89–109 (MIAFAMALLGCVLIMYKAIWY) form a helical membrane-spanning segment. Topologically, residues 110-226 (DQFTCPDGFL…AEGVPSQPPK (117 aa)) are cytoplasmic. A disordered region spans residues 177–226 (HKGTTPAAMAVSTAAAAAAAEGTEPSGKSLDTREKEDPQKAEGVPSQPPK). Over residues 183 to 196 (AAMAVSTAAAAAAA) the composition is skewed to low complexity. The span at 206–216 (LDTREKEDPQK) shows a compositional bias: basic and acidic residues.

Belongs to the NSG family. Interacts with CLTA. As to expression, most abundant in brain. Also expressed in testis and ovary and, at much lower levels, in kidney and heart.

The protein localises to the cytoplasmic vesicle membrane. It is found in the cell membrane. Its function is as follows. Interacts with clathrin light chain A and stimulates clathrin self-assembly and clathrin-mediated endocytosis. This Mus musculus (Mouse) protein is Neuron-specific vesicular protein calcyon (Caly).